Reading from the N-terminus, the 134-residue chain is MHHQKQQQQQKQQGEAPCRHLQWRLSGVVLCVLVVASLVSTAASSPLDPHHLAKRSFFDIQCKGVYDKSIFARLDRICEDCYNLFREPQLHSLCRKDCFTSDYFKGCIDVLLLQDDMDKIQSWIKQIHGAEPGV.

Intrachain disulfides connect cysteine 62-cysteine 98, cysteine 78-cysteine 94, and cysteine 81-cysteine 107.

Belongs to the arthropod CHH/MIH/GIH/VIH hormone family.

Its subcellular location is the secreted. This chain is Ion transport peptide-like, found in Schistocerca gregaria (Desert locust).